A 2377-amino-acid chain; its full sequence is DNA (cytosine-5-)-methyltransferase DMT5 (2377 aa).

A disordered region spans residues 24 to 56; sequence GTADGAVNGGNIPNSQSQKRKRASPSPEIESEE. The 65-residue stretch at 62 to 126 folds into the Chromo; shadow subtype domain; it reads YEIDYIADSR…KNPGKPRLSP (65 aa). The interval 150 to 282 is disordered; the sequence is GKSRAASSTD…KSSLPKAKLR (133 aa). The segment covering 201-213 has biased composition (basic residues); sequence PTSKKVHPNKKCK. Acidic residues-rich tracts occupy residues 217 to 238 and 245 to 263; these read DDES…DDND and EDDE…ESDE. Over residues 268–282 the composition is skewed to basic residues; sequence PAKKTKSSLPKAKLR. Residues 347-753 enclose the SAM-dependent MTase C5-type domain; that stretch reads LRVATMCSGT…IAALKVACHK (407 aa). Cysteine 440 is a catalytic residue. Positions 1450–1771 constitute a Helicase ATP-binding domain; sequence AERPVMVRGG…RSIATFMGIH (322 aa). ATP is bound at residue 1463 to 1470; it reads DQVGYGKT. 3 disordered regions span residues 1642–1680, 2313–2334, and 2347–2377; these read KGQA…ENSK, KGRG…TVKS, and SSFR…SDII. The segment covering 1645-1669 has biased composition (basic and acidic residues); the sequence is AYRDKHDSDSKAKPITKEELERWEA. In terms of domain architecture, Helicase C-terminal spans 2152–2315; sequence KLEHLVNLIH…EIPQEEYKGR (164 aa). Polar residues predominate over residues 2317-2334; the sequence is SSISMTNEKRTPTLTVKS. Residues 2363-2377 show a composition bias toward acidic residues; the sequence is GVSDDDENSELSDII.

This sequence in the N-terminal section; belongs to the class I-like SAM-binding methyltransferase superfamily. C5-methyltransferase family. In the C-terminal section; belongs to the SNF2/RAD54 helicase family. Interacts with SWI6. Mg(2+) serves as cofactor.

The protein resides in the nucleus. It localises to the chromosome. The catalysed reaction is a 2'-deoxycytidine in DNA + S-adenosyl-L-methionine + ATP + H2O = a 5-methyl-2'-deoxycytidine in DNA + S-adenosyl-L-homocysteine + ADP + phosphate + 2 H(+). Hemimethylated DNA substrates stimulate ATP hydrolysis and this is a prerequisite for methyltransferase activity. Functionally, ATP-dependent cytosine methylase that maintains DNA methylation by acting at hemimethylated palindromic 5'-CG-3' sites to produce symmetrically methylated DNA strands. DNA methylation may play a role in transcriptional silencing, particularly at transposable elements. The chain is DNA (cytosine-5-)-methyltransferase DMT5 from Cryptococcus neoformans var. grubii serotype A (strain H99 / ATCC 208821 / CBS 10515 / FGSC 9487) (Filobasidiella neoformans var. grubii).